A 179-amino-acid polypeptide reads, in one-letter code: uncharacterized protein (179 aa).

The protein localises to the plastid. The protein resides in the cyanelle. This is an uncharacterized protein from Cyanophora paradoxa.